The primary structure comprises 151 residues: Neuroglobin (151 aa).

The 149-residue stretch at 1-149 folds into the Globin domain; sequence MERPEQELIR…VVQAMSRGWD (149 aa). Heme b is bound by residues His-64 and His-96.

Belongs to the globin family. As to quaternary structure, monomer. Homodimer and homotetramer; disulfide-linked. Mainly monomeric but also detected as part of homodimers and homotetramers. Interacts with 14-3-3 proteins; regulates the phosphorylation of NGB. Could interact (ferrous form) with G-alpha(i) proteins (GTP-bound form). In terms of processing, phosphorylated during hypoxia by ERK1/ERK2. Phosphorylation regulates the heme pocket hexacoordination preventing the association of His-64 with the heme metal center. Thereby, promotes the access of dioxygen and nitrite to the heme and stimulates the nitrite reductase activity. Phosphorylation during hypoxia is stabilized by 14-3-3 proteins.

The protein localises to the cytoplasm. Its subcellular location is the cytosol. It is found in the mitochondrion matrix. The catalysed reaction is Fe(III)-heme b-[protein] + nitric oxide + H2O = Fe(II)-heme b-[protein] + nitrite + 2 H(+). In terms of biological role, monomeric globin with a bis-histidyl six-coordinate heme-iron atom through which it can bind dioxygen, carbon monoxide and nitric oxide. Could help transport oxygen and increase its availability to the metabolically active neuronal tissues, though its low quantity in tissues as well as its high affinity for dioxygen, which may limit its oxygen-releasing ability, argue against it. The ferrous/deoxygenated form exhibits a nitrite reductase activity and it could produce nitric oxide which in turn inhibits cellular respiration in response to hypoxia. In its ferrous/deoxygenated state, it may also exhibit GDI (Guanine nucleotide Dissociation Inhibitor) activity toward heterotrimeric G-alpha proteins, thereby regulating signal transduction to facilitate neuroprotective responses in the wake of hypoxia and associated oxidative stress. The chain is Neuroglobin from Oryctolagus cuniculus (Rabbit).